The primary structure comprises 75 residues: Endogenous retrovirus group K member 5 Np9 protein (75 aa).

The disordered stretch occupies residues 22–43; that stretch reads TAPKRQRPSRTGHDDDGGFVEK. Over residues 32 to 43 the composition is skewed to basic and acidic residues; it reads TGHDDDGGFVEK.

It localises to the nucleus. May possess a function in tumorigenesis. The sequence is that of Endogenous retrovirus group K member 5 Np9 protein (ERVK-5) from Homo sapiens (Human).